We begin with the raw amino-acid sequence, 392 residues long: Bifunctional enzyme IspD/IspF (392 aa).

2-C-methyl-D-erythritol 4-phosphate cytidylyltransferase regions lie at residues 1-234 (MTES…MMRT) and 1-235 (MTES…MRTA). The 2-C-methyl-D-erythritol 2,4-cyclodiphosphate synthase stretch occupies residues 235 to 392 (AVGMGYDVHR…AVATIQLPET (158 aa)). 2 residues coordinate a divalent metal cation: D241 and H243. Residues 241–243 (DVH) and 267–268 (HS) contribute to the 4-CDP-2-C-methyl-D-erythritol 2-phosphate site. H275 provides a ligand contact to a divalent metal cation. 4-CDP-2-C-methyl-D-erythritol 2-phosphate-binding positions include 289–291 (DIG), 365–368 (TTTE), F372, and R375.

In the N-terminal section; belongs to the IspD/TarI cytidylyltransferase family. IspD subfamily. The protein in the C-terminal section; belongs to the IspF family. It depends on a divalent metal cation as a cofactor.

It catalyses the reaction 2-C-methyl-D-erythritol 4-phosphate + CTP + H(+) = 4-CDP-2-C-methyl-D-erythritol + diphosphate. The enzyme catalyses 4-CDP-2-C-methyl-D-erythritol 2-phosphate = 2-C-methyl-D-erythritol 2,4-cyclic diphosphate + CMP. Its pathway is isoprenoid biosynthesis; isopentenyl diphosphate biosynthesis via DXP pathway; isopentenyl diphosphate from 1-deoxy-D-xylulose 5-phosphate: step 2/6. It participates in isoprenoid biosynthesis; isopentenyl diphosphate biosynthesis via DXP pathway; isopentenyl diphosphate from 1-deoxy-D-xylulose 5-phosphate: step 4/6. Functionally, bifunctional enzyme that catalyzes the formation of 4-diphosphocytidyl-2-C-methyl-D-erythritol from CTP and 2-C-methyl-D-erythritol 4-phosphate (MEP) (IspD), and catalyzes the conversion of 4-diphosphocytidyl-2-C-methyl-D-erythritol 2-phosphate (CDP-ME2P) to 2-C-methyl-D-erythritol 2,4-cyclodiphosphate (ME-CPP) with a corresponding release of cytidine 5-monophosphate (CMP) (IspF). This Sphingopyxis alaskensis (strain DSM 13593 / LMG 18877 / RB2256) (Sphingomonas alaskensis) protein is Bifunctional enzyme IspD/IspF.